A 637-amino-acid chain; its full sequence is Chaperone protein HtpG (637 aa).

Positions 1-345 (MSQQETHGFQ…SNDLPLNVSR (345 aa)) are a; substrate-binding. A b region spans residues 346–562 (EILQDNHITK…EGEMSSQMIK (217 aa)). The c stretch occupies residues 563–637 (LMQAAGQPVP…MNQMLLANLK (75 aa)).

It belongs to the heat shock protein 90 family. In terms of assembly, homodimer.

It is found in the cytoplasm. In terms of biological role, molecular chaperone. Has ATPase activity. This is Chaperone protein HtpG from Shewanella sp. (strain MR-7).